We begin with the raw amino-acid sequence, 450 residues long: Phosphoglucosamine mutase (450 aa).

The Phosphoserine intermediate role is filled by Ser102. Residues Ser102, Asp243, Asp245, and Asp247 each contribute to the Mg(2+) site. Ser102 carries the post-translational modification Phosphoserine.

Belongs to the phosphohexose mutase family. Mg(2+) is required as a cofactor. Activated by phosphorylation.

The catalysed reaction is alpha-D-glucosamine 1-phosphate = D-glucosamine 6-phosphate. Its function is as follows. Catalyzes the conversion of glucosamine-6-phosphate to glucosamine-1-phosphate. In Allorhizobium ampelinum (strain ATCC BAA-846 / DSM 112012 / S4) (Agrobacterium vitis (strain S4)), this protein is Phosphoglucosamine mutase.